We begin with the raw amino-acid sequence, 130 residues long: Small ribosomal subunit protein uS8 (130 aa).

Belongs to the universal ribosomal protein uS8 family. Part of the 30S ribosomal subunit. Contacts proteins S5 and S12.

One of the primary rRNA binding proteins, it binds directly to 16S rRNA central domain where it helps coordinate assembly of the platform of the 30S subunit. This Saccharophagus degradans (strain 2-40 / ATCC 43961 / DSM 17024) protein is Small ribosomal subunit protein uS8.